A 115-amino-acid chain; its full sequence is Somatostatin-2 (115 aa).

Residues Met1–Ala18 form the signal peptide. A propeptide spanning residues Ile19 to Arg87 is cleaved from the precursor. A disulfide bridge links Cys104 with Cys115.

The protein belongs to the somatostatin family.

The protein resides in the secreted. Its function is as follows. Somatostatin inhibits the release of somatotropin. The protein is Somatostatin-2 (sst2) of Oncorhynchus mykiss (Rainbow trout).